The sequence spans 292 residues: Feruloyl esterase B (292 aa).

A signal peptide spans 1–18 (MLPRTLLGLALTAATGLC). N-linked (GlcNAc...) asparagine glycans are attached at residues Asn88, Asn117, Asn179, and Asn245.

The protein belongs to the carbohydrate esterase 1 (CE1) family. Feruloyl esterase type B subfamily.

It localises to the secreted. The enzyme catalyses feruloyl-polysaccharide + H2O = ferulate + polysaccharide.. In terms of biological role, involved in degradation of plant cell walls. Hydrolyzes of the feruloyl-arabinose ester bond in arabinoxylans as well as the feruloyl-galactose and feruloyl-arabinose ester bonds in pectin. This is Feruloyl esterase B (fae-1) from Neurospora crassa (strain ATCC 24698 / 74-OR23-1A / CBS 708.71 / DSM 1257 / FGSC 987).